We begin with the raw amino-acid sequence, 99 residues long: Beta-defensin 127 (99 aa).

The N-terminal stretch at 1-20 (MGLFMIIAILLFQKPTVTEQ) is a signal peptide. 3 disulfides stabilise this stretch: Cys24–Cys53, Cys33–Cys47, and Cys37–Cys54. Residues 66 to 99 (ITKPSHPKPATLALTLQDYVTIIENFPSLKTQST) constitute a propeptide that is removed on maturation.

The protein belongs to the beta-defensin family.

The protein resides in the secreted. Its function is as follows. Has antibacterial activity. The protein is Beta-defensin 127 (DEFB127) of Pan troglodytes (Chimpanzee).